The primary structure comprises 893 residues: UPF0182 protein CLM_0018 (893 aa).

The next 7 helical transmembrane spans lie at Ile-9–Ile-29, Ala-49–Tyr-69, Leu-94–Tyr-114, Val-154–Glu-174, Leu-202–Trp-222, Phe-246–Val-266, and Val-273–Leu-293.

The protein belongs to the UPF0182 family.

The protein resides in the cell membrane. The chain is UPF0182 protein CLM_0018 from Clostridium botulinum (strain Kyoto / Type A2).